The primary structure comprises 689 residues: Solute carrier family 22 member 23 (689 aa).

Disordered stretches follow at residues 1-55 (MAID…PLPA) and 162-188 (TASWGTTSNRSNSSDTPPLPSPPGKGN). An N-linked (GlcNAc...) asparagine glycan is attached at asparagine 24. The segment covering 165-177 (WGTTSNRSNSSDT) has biased composition (polar residues). The next 2 helical transmembrane spans lie at 229–249 (FSLLVGLIFGYLITGCIADWV) and 253–273 (PVLLFSVIFILIFGLTVALSV). N-linked (GlcNAc...) asparagine glycosylation is present at asparagine 274. Transmembrane regions (helical) follow at residues 283–303 (FFEGFCLAGIILTLYALRIEL), 310–330 (FIITMVASFVAMAGQFLMPGL), 339–359 (VLQALIICPFLLMLLYWSIFP), 462–482 (ADYYTMASIALASCLAMCLVV), 489–509 (GGLLLFMILTALASLLQLGLL), 541–561 (IAFSIVGMFASHAVGSLSVFF), 572–592 (CGGLGLVLASAGFGMLTAPII), and 601–621 (FLHHIIFACCTLICIICILLL).

This sequence belongs to the major facilitator (TC 2.A.1) superfamily. Organic cation transporter (TC 2.A.1.19) family. As to expression, expressed in many tissues, including brain, spinal cord, kidney, liver, eye, adipose tissue, lung, epididymis, adrenal gland, pineal gland, skeletal muscle, heart, spleen, thymus, ovary, uterus, testis and epididymis.

It is found in the membrane. This chain is Solute carrier family 22 member 23 (Slc22a23), found in Rattus norvegicus (Rat).